The primary structure comprises 163 residues: Ubiquitin-like protein 1-ribosomal protein eS31 fusion protein (163 aa).

The Ubiquitin-like domain occupies 1 to 70 (MVFVKTLHRT…IYVNLELLGG (70 aa)). A Glycyl lysine isopeptide (Gly-Lys) (interchain with K-? in acceptor proteins) cross-link involves residue glycine 70. The C4-type zinc finger occupies 115–138 (CQQPSCGGGVFMAQHANRHYCGRC).

The protein in the N-terminal section; belongs to the ubiquitin family. This sequence in the C-terminal section; belongs to the eukaryotic ribosomal protein eS31 family.

This chain is Ubiquitin-like protein 1-ribosomal protein eS31 fusion protein, found in Caenorhabditis elegans.